We begin with the raw amino-acid sequence, 202 residues long: Virulence protein F (202 aa).

Positions 1-15 (MRNSSLRDASGSNDA) are enriched in polar residues. Residues 1–21 (MRNSSLRDASGSNDAQVPHKT) form a disordered region. The F-box domain occupies 20-42 (KTELLNLPDHVLTEVAKRLATNN).

In terms of assembly, component of SCF(virF) E3 ubiquitin ligase complexes. Interacts with host VIP1 and SKP1A. Interacts with Arabidopsis thaliana ENAP1/VFP3 and VFP5 in the host cell nucleus.

The protein resides in the host nucleus. Its function is as follows. In the host plant, component of SCF(virF) E3 ubiquitin ligase complexes, which mediate the ubiquitination and subsequent proteasomal degradation of target proteins such as the host VIP1, after its implication in T-DNA translocation to the host nucleus. Required for the formation of tumors of a wild-type size on certain plant species only. This chain is Virulence protein F, found in Agrobacterium tumefaciens (strain 15955).